Reading from the N-terminus, the 414-residue chain is Esterase FrsA (414 aa).

The protein belongs to the FrsA family.

It catalyses the reaction a carboxylic ester + H2O = an alcohol + a carboxylate + H(+). In terms of biological role, catalyzes the hydrolysis of esters. The chain is Esterase FrsA from Escherichia coli O6:K15:H31 (strain 536 / UPEC).